The primary structure comprises 419 residues: Histidine--tRNA ligase (419 aa).

It belongs to the class-II aminoacyl-tRNA synthetase family.

The protein resides in the cytoplasm. The enzyme catalyses tRNA(His) + L-histidine + ATP = L-histidyl-tRNA(His) + AMP + diphosphate + H(+). The sequence is that of Histidine--tRNA ligase from Pyrobaculum arsenaticum (strain DSM 13514 / JCM 11321 / PZ6).